The chain runs to 503 residues: AMP phosphorylase (503 aa).

Residues Gly-168, 194–199, and Thr-203 contribute to the AMP site; that span reads SRAITS. Residue Asp-256 is the Proton donor of the active site. Residues Ser-264 and Lys-288 each contribute to the AMP site.

This sequence belongs to the thymidine/pyrimidine-nucleoside phosphorylase family. Type 2 subfamily.

It catalyses the reaction AMP + phosphate = alpha-D-ribose 1,5-bisphosphate + adenine. It carries out the reaction CMP + phosphate = cytosine + alpha-D-ribose 1,5-bisphosphate. The catalysed reaction is UMP + phosphate = alpha-D-ribose 1,5-bisphosphate + uracil. Catalyzes the conversion of AMP and phosphate to adenine and ribose 1,5-bisphosphate (R15P). Exhibits phosphorylase activity toward CMP and UMP in addition to AMP. Functions in an archaeal AMP degradation pathway, together with R15P isomerase and RubisCO. This chain is AMP phosphorylase, found in Thermococcus sibiricus (strain DSM 12597 / MM 739).